We begin with the raw amino-acid sequence, 349 residues long: Glycerol-3-phosphate dehydrogenase [NAD(+)], cytoplasmic (349 aa).

Residues 10–15 (GSGNWG), phenylalanine 41, and phenylalanine 97 contribute to the NAD(+) site. Substrate is bound at residue lysine 120. Alanine 153 contributes to the NAD(+) binding site. Serine 154 is modified (phosphoserine). The active-site Proton acceptor is the lysine 204. Arginine 269 contributes to the NAD(+) binding site. 269–270 (RN) contacts substrate. Lysine 289 bears the N6-succinyllysine mark. NAD(+)-binding residues include lysine 296 and glutamine 298. Residue tyrosine 326 is modified to Phosphotyrosine.

The protein belongs to the NAD-dependent glycerol-3-phosphate dehydrogenase family. Homodimer. In terms of tissue distribution, expressed in liver (at protein level).

Its subcellular location is the cytoplasm. The enzyme catalyses sn-glycerol 3-phosphate + NAD(+) = dihydroxyacetone phosphate + NADH + H(+). With respect to regulation, inhibited by zinc ions and sulfate. Its function is as follows. Has glycerol-3-phosphate dehydrogenase activity. The protein is Glycerol-3-phosphate dehydrogenase [NAD(+)], cytoplasmic of Homo sapiens (Human).